The sequence spans 409 residues: Effector protein BipC (409 aa).

Disordered regions lie at residues 268–287 (RETG…RMSD) and 330–396 (SGGQ…VAND). A compositionally biased stretch (low complexity) spans 360-369 (AQQTAMAAAS). The segment covering 370–382 (ARDEAAHRGRDAA) has biased composition (basic and acidic residues).

The protein belongs to the SctB/SipC family.

It localises to the secreted. This Burkholderia thailandensis (strain ATCC 700388 / DSM 13276 / CCUG 48851 / CIP 106301 / E264) protein is Effector protein BipC (bipC).